Consider the following 197-residue polypeptide: MSDTPVIGVLALQGDVREHLIALASADALARPVRRPEELAEVDGLVIPGGESTTMSKLAVLFGMMEPLRERVRAGMPVYGTCAGMILLAEKILDPRSGQETVGGIDMIVRRNAFGRQNESFEAAVEVGGVEGGPVDGVFIRAPWVESVGARTEVIAEHGGHIVAVRQENALATSFHPELTGDHRVHALFVDMVRAVN.

50–52 contributes to the L-glutamine binding site; that stretch reads GES. The active-site Nucleophile is Cys82. L-glutamine-binding positions include Arg111 and 140–141; that span reads IR. Catalysis depends on charge relay system residues His176 and Glu178.

This sequence belongs to the glutaminase PdxT/SNO family. As to quaternary structure, in the presence of PdxS, forms a dodecamer of heterodimers. Only shows activity in the heterodimer.

The catalysed reaction is aldehydo-D-ribose 5-phosphate + D-glyceraldehyde 3-phosphate + L-glutamine = pyridoxal 5'-phosphate + L-glutamate + phosphate + 3 H2O + H(+). It carries out the reaction L-glutamine + H2O = L-glutamate + NH4(+). The protein operates within cofactor biosynthesis; pyridoxal 5'-phosphate biosynthesis. Its function is as follows. Catalyzes the hydrolysis of glutamine to glutamate and ammonia as part of the biosynthesis of pyridoxal 5'-phosphate. The resulting ammonia molecule is channeled to the active site of PdxS. In Streptomyces griseus subsp. griseus (strain JCM 4626 / CBS 651.72 / NBRC 13350 / KCC S-0626 / ISP 5235), this protein is Pyridoxal 5'-phosphate synthase subunit PdxT.